Consider the following 1142-residue polypeptide: Golgi apparatus protein 1 (1142 aa).

Residues 1 to 29 form the signal peptide; it reads MAPCGRVRSRCPGPALLLLLALAARPALA. Residues 30–1108 lie on the Extracellular side of the membrane; sequence GPPAAALQAG…MQVMTSPSKN (1079 aa). Low complexity predominate over residues 45-60; it reads AGQPAQGAAPGAAGPR. The disordered stretch occupies residues 45–69; the sequence is AGQPAQGAAPGAAGPRGARGGGGGS. Cys-rich GLG1 repeat units follow at residues 81-112, 113-175, 178-241, 249-309, 310-376, 377-436, 438-500, 501-567, 572-631, 633-691, 692-751, 759-819, 821-874, 875-942, 943-998, and 1004-1064; these read CREDVVRLCSKHSWANNLAVLECLQDVREPDN, EISS…GNIT, QCHQ…VKEA, QVSD…FEES, MSEK…HRGR, QVSS…RGEK, NVGL…YTEK, MVED…YRTE, RLSR…DDLV, DCRD…KHQK, EMNE…RNDT, RVSL…KQLS, RCHQ…KNSE, VMDP…ADQR, LSPD…ECLK, and IKTE…EDKR. N-linked (GlcNAc...) asparagine glycans are attached at residues N128 and N173. A glycan (N-linked (GlcNAc...) asparagine) is linked at N544. Residues N640 and N749 are each glycosylated (N-linked (GlcNAc...) asparagine). A helical transmembrane segment spans residues 1109–1129; sequence YILSVITVGICVLFLIGLMCG. At 1130 to 1142 the chain is on the cytoplasmic side; that stretch reads RITKRVTRELKDR.

Fucosylation is essential for binding to E-selectin. In terms of processing, N-glycosylated. Contains sialic acid residues.

It localises to the golgi apparatus membrane. The protein localises to the golgi outpost. It is found in the cytoplasm. Its subcellular location is the cytoskeleton. The protein resides in the microtubule organizing center. Binds fibroblast growth factor and E-selectin (cell-adhesion lectin on endothelial cells mediating the binding of neutrophils). Binds fibroblast growth factor (FGF). May be involved in intracellular FGF trafficking and the regulation of cellular responses to FGFS. In Gallus gallus (Chicken), this protein is Golgi apparatus protein 1 (GLG1).